The primary structure comprises 274 residues: Dermonecrotic toxin SdSicTox-betaIIB1bviii (274 aa).

The active site involves H5. Residues E25 and D27 each contribute to the Mg(2+) site. H41 functions as the Nucleophile in the catalytic mechanism. Disulfide bonds link C45–C51 and C47–C190. Mg(2+) is bound at residue D85.

This sequence belongs to the arthropod phospholipase D family. Class II subfamily. Mg(2+) serves as cofactor. Expressed by the venom gland.

The protein resides in the secreted. The enzyme catalyses an N-(acyl)-sphingosylphosphocholine = an N-(acyl)-sphingosyl-1,3-cyclic phosphate + choline. It carries out the reaction an N-(acyl)-sphingosylphosphoethanolamine = an N-(acyl)-sphingosyl-1,3-cyclic phosphate + ethanolamine. The catalysed reaction is a 1-acyl-sn-glycero-3-phosphocholine = a 1-acyl-sn-glycero-2,3-cyclic phosphate + choline. It catalyses the reaction a 1-acyl-sn-glycero-3-phosphoethanolamine = a 1-acyl-sn-glycero-2,3-cyclic phosphate + ethanolamine. Functionally, dermonecrotic toxins cleave the phosphodiester linkage between the phosphate and headgroup of certain phospholipids (sphingolipid and lysolipid substrates), forming an alcohol (often choline) and a cyclic phosphate. This toxin acts on sphingomyelin (SM). It may also act on ceramide phosphoethanolamine (CPE), lysophosphatidylcholine (LPC) and lysophosphatidylethanolamine (LPE), but not on lysophosphatidylserine (LPS), and lysophosphatidylglycerol (LPG). It acts by transphosphatidylation, releasing exclusively cyclic phosphate products as second products. Induces dermonecrosis, hemolysis, increased vascular permeability, edema, inflammatory response, and platelet aggregation. This chain is Dermonecrotic toxin SdSicTox-betaIIB1bviii, found in Sicarius cf. damarensis (strain GJB-2008) (Six-eyed sand spider).